The primary structure comprises 78 residues: Short neurotoxin OH-26 (78 aa).

An N-terminal signal peptide occupies residues 1 to 21 (MKNLLLTFLVVTIVCLDLGYT). 4 disulfides stabilise this stretch: Cys-24/Cys-40, Cys-33/Cys-58, Cys-62/Cys-70, and Cys-71/Cys-76.

This sequence belongs to the three-finger toxin family. Short-chain subfamily. In terms of tissue distribution, expressed by the venom gland.

It is found in the secreted. Its function is as follows. This three-finger toxin binds and inhibits the nicotinic acetylcholine receptor (nAChR). The chain is Short neurotoxin OH-26 from Ophiophagus hannah (King cobra).